Consider the following 457-residue polypeptide: PDZ and LIM domain protein 7 (457 aa).

Positions methionine 1–glutamine 85 constitute a PDZ domain. At serine 78 the chain carries Phosphoserine. 2 disordered regions span residues serine 82–serine 166 and phenylalanine 186–valine 226. Threonine 96 is modified (phosphothreonine). Arginine 103 bears the Asymmetric dimethylarginine mark. Serine 111 bears the Phosphoserine mark. Over residues aspartate 126 to leucine 135 the composition is skewed to polar residues. Basic and acidic residues predominate over residues serine 144 to proline 157. Serine 247 carries the post-translational modification Phosphoserine. LIM zinc-binding domains are found at residues proline 280 to alanine 338, proline 339 to threonine 398, and lysine 399 to valine 457.

In terms of assembly, specifically binds via its LIM zinc-binding 3 domain (LIM 3) domain to endocytic codes of INSR, but not with those of IGF1R, LDLR, TFRC, or EGFR. Interacts with various PKC isoforms through the LIM zinc-binding domains. Binds to RET in a phosphorylation-independent manner via its LIM zinc-binding domain 2 (LIM 2). Probably part of a complex with SHC and the RET dimer. Interacts with TPM2, TBX4 and TBX5.

It is found in the cytoplasm. It localises to the cytoskeleton. In terms of biological role, may function as a scaffold on which the coordinated assembly of proteins can occur. May play a role as an adapter that, via its PDZ domain, localizes LIM-binding proteins to actin filaments of both skeletal muscle and nonmuscle tissues. Involved in both of the two fundamental mechanisms of bone formation, direct bone formation (e.g. embryonic flat bones mandible and cranium), and endochondral bone formation (e.g. embryonic long bone development). Plays a role during fracture repair. Involved in BMP6 signaling pathway. The sequence is that of PDZ and LIM domain protein 7 (Pdlim7) from Mus musculus (Mouse).